We begin with the raw amino-acid sequence, 350 residues long: MAFKIASSPHLSRSFQTSSLMQRVILCALPGVAVQCFFFGWGTVIQALLAMSVALLSEAVVLKLRARNVTDTLRDNSALLTGLLIGIAIPPLAPWWVTVIGTLFAIVIVKQLYGGLGHNIFNPAMAAYVMLLISFPVQMTSWVAPSVIASQPVDFIHSLQMIFTGASSSEINAYKLGFDGISMATPLDTIKTDLAMGLTTTESLSKAIFSDGFGVGWFWVNLAYLAGGLVMLKLKVIRWHITAGILAALFICSGVGYLLNPDTFTGPLLHLFSGATMLAAFFIATDPVTAATSVRGRLVFGALIGILVYIIRTFGGYPDAFAFAILLANLCAPFIDHYMKPRAYGHRSAT.

A run of 3 helical transmembrane segments spans residues 25–45 (ILCA…GTVI), 89–109 (IPPL…IVIV), and 129–149 (VMLL…SVIA). Thr185 is modified (FMN phosphoryl threonine). The next 5 membrane-spanning stretches (helical) occupy residues 212–232 (GFGV…LVML), 239–259 (WHIT…GYLL), 264–284 (FTGP…FFIA), 298–318 (LVFG…GGYP), and 319–339 (DAFA…DHYM).

This sequence belongs to the NqrB/RnfD family. In terms of assembly, the complex is composed of six subunits: RnfA, RnfB, RnfC, RnfD, RnfE and RnfG. FMN is required as a cofactor.

The protein localises to the cell inner membrane. Its function is as follows. Part of a membrane-bound complex that couples electron transfer with translocation of ions across the membrane. The chain is Ion-translocating oxidoreductase complex subunit D from Shewanella sediminis (strain HAW-EB3).